We begin with the raw amino-acid sequence, 762 residues long: Protein PHTF1 (762 aa).

The PHTF domain occupies 6 to 150 (RDAISWYQKK…VHCQIVSTQI (145 aa)). The next 3 helical transmembrane spans lie at 77-97 (GLVR…VTSL), 99-119 (IFVW…LYLM), and 121-141 (PIVN…MGTV). Residues 152 to 184 (RPSGNNGNRRRRKLRKTVNGDGSRENGNNSSDK) form a disordered region. N-linked (GlcNAc...) asparagine glycans are attached at residues asparagine 179 and asparagine 180. Residues serine 272, serine 276, serine 277, serine 334, and serine 336 each carry the phosphoserine modification. Disordered stretches follow at residues 344–380 (SAAF…ETED) and 393–415 (RSSV…TKRD). Positions 348–361 (SQGSRSGVSGGSRS) are enriched in low complexity. An N-linked (GlcNAc...) asparagine glycan is attached at asparagine 363. Over residues 365 to 376 (SRRDSESTRHDS) the composition is skewed to basic and acidic residues. Asparagine 431 is a glycosylation site (N-linked (GlcNAc...) asparagine). Helical transmembrane passes span 473–493 (GVGY…FPFL), 512–532 (EILT…LSII), 611–631 (VVVS…CAQV), and 645–665 (WEFL…ASLG). N-linked (GlcNAc...) asparagine glycosylation is found at asparagine 674 and asparagine 733. A helical transmembrane segment spans residues 737-757 (VVILSAVSGVISDLLGFNIRL).

Interacts with FEM1B. Widely expressed with highest levels in testis.

The protein localises to the endoplasmic reticulum membrane. It localises to the golgi apparatus. Its subcellular location is the cis-Golgi network membrane. The polypeptide is Protein PHTF1 (Homo sapiens (Human)).